The sequence spans 97 residues: Defensin-like protein 196 (97 aa).

The N-terminal stretch at methionine 1–alanine 28 is a signal peptide. Intrachain disulfides connect cysteine 33-cysteine 85, cysteine 46-cysteine 70, cysteine 55-cysteine 80, and cysteine 59-cysteine 82.

This sequence belongs to the DEFL family. Protease inhibitor I18 (RTI/MTI-2) subfamily.

The protein resides in the secreted. In Arabidopsis thaliana (Mouse-ear cress), this protein is Defensin-like protein 196 (ATTI4).